A 161-amino-acid chain; its full sequence is SsrA-binding protein (161 aa).

The segment at 137-161 (HDKRTDSKEKDWNRDKARIMKSSLR) is disordered. Residues 139-154 (KRTDSKEKDWNRDKAR) are compositionally biased toward basic and acidic residues.

The protein belongs to the SmpB family.

The protein resides in the cytoplasm. In terms of biological role, required for rescue of stalled ribosomes mediated by trans-translation. Binds to transfer-messenger RNA (tmRNA), required for stable association of tmRNA with ribosomes. tmRNA and SmpB together mimic tRNA shape, replacing the anticodon stem-loop with SmpB. tmRNA is encoded by the ssrA gene; the 2 termini fold to resemble tRNA(Ala) and it encodes a 'tag peptide', a short internal open reading frame. During trans-translation Ala-aminoacylated tmRNA acts like a tRNA, entering the A-site of stalled ribosomes, displacing the stalled mRNA. The ribosome then switches to translate the ORF on the tmRNA; the nascent peptide is terminated with the 'tag peptide' encoded by the tmRNA and targeted for degradation. The ribosome is freed to recommence translation, which seems to be the essential function of trans-translation. This Aliivibrio salmonicida (strain LFI1238) (Vibrio salmonicida (strain LFI1238)) protein is SsrA-binding protein.